The primary structure comprises 201 residues: Recombination protein RecR (201 aa).

The C4-type zinc-finger motif lies at 57-74 (CRICGFITSKDDDPCVIC). In terms of domain architecture, Toprim spans 82–178 (SKIFVVENSQ…KVTRLARGLS (97 aa)).

It belongs to the RecR family.

Its function is as follows. May play a role in DNA repair. It seems to be involved in an RecBC-independent recombinational process of DNA repair. It may act with RecF and RecO. The sequence is that of Recombination protein RecR from Oenococcus oeni (strain ATCC BAA-331 / PSU-1).